We begin with the raw amino-acid sequence, 462 residues long: MSAFVVAYFPHLCLAFGGLLVLCLSMARSVPAGFYPATAALFAALPGLWAVAGPQGGSPIACFYAGLLSVIALATIALLARYAERRGFAGDALYGLLLWSALGMLLLADADDWIMLAVGLELASLCLYALIAARLDDNLGTEAALKYFLPGAMALAVLLFGMALIYAASGSMEIAASLAAPGPLTAAGLALVLVGVGFKLSLAPVHLWTPDVYQGAPAPVAAFLSSGSKAAAAAALLHVCSEVSPEARELLWPALAVGAGLTMAVGNLGAVAQASVKRLLAYSSIAQMGYILMAAMAVNDGGGEAALFYLAAFALMDLAAFGAVGALSAQIGDRDDIAAYRGLGYVHPWRAGVLAIGLASLAGLPPTAGFVGKFLVFGAALSAGYVGLAAFGIITAVVGVFYALRLLAALYMRESLIAHPAAVYAAGPAGTLALGVMAAGLVGLGLFPQTLLGAIAALFGGA.

The next 15 membrane-spanning stretches (helical) occupy residues Phe4–Leu24, Ala32–Ala52, Ile60–Ala80, Phe88–Ala108, Trp113–Ala133, Phe148–Ala168, Leu178–Phe198, Val220–Cys240, Leu251–Val271, Leu279–Asn299, Leu307–Leu327, Ala351–Val371, Phe374–Ile394, Leu416–Val436, and Ala439–Phe459.

It belongs to the complex I subunit 2 family. NDH-1 is composed of 14 different subunits. Subunits NuoA, H, J, K, L, M, N constitute the membrane sector of the complex.

The protein localises to the cell inner membrane. It catalyses the reaction a quinone + NADH + 5 H(+)(in) = a quinol + NAD(+) + 4 H(+)(out). Its function is as follows. NDH-1 shuttles electrons from NADH, via FMN and iron-sulfur (Fe-S) centers, to quinones in the respiratory chain. The immediate electron acceptor for the enzyme in this species is believed to be ubiquinone. Couples the redox reaction to proton translocation (for every two electrons transferred, four hydrogen ions are translocated across the cytoplasmic membrane), and thus conserves the redox energy in a proton gradient. The chain is NADH-quinone oxidoreductase subunit N 1 from Solidesulfovibrio magneticus (strain ATCC 700980 / DSM 13731 / RS-1) (Desulfovibrio magneticus).